A 484-amino-acid polypeptide reads, in one-letter code: Probable glycine dehydrogenase (decarboxylating) subunit 2 (484 aa).

Residue Lys270 is modified to N6-(pyridoxal phosphate)lysine.

It belongs to the GcvP family. C-terminal subunit subfamily. The glycine cleavage system is composed of four proteins: P, T, L and H. In this organism, the P 'protein' is a heterodimer of two subunits. Pyridoxal 5'-phosphate is required as a cofactor.

The catalysed reaction is N(6)-[(R)-lipoyl]-L-lysyl-[glycine-cleavage complex H protein] + glycine + H(+) = N(6)-[(R)-S(8)-aminomethyldihydrolipoyl]-L-lysyl-[glycine-cleavage complex H protein] + CO2. Functionally, the glycine cleavage system catalyzes the degradation of glycine. The P protein binds the alpha-amino group of glycine through its pyridoxal phosphate cofactor; CO(2) is released and the remaining methylamine moiety is then transferred to the lipoamide cofactor of the H protein. This chain is Probable glycine dehydrogenase (decarboxylating) subunit 2, found in Desulforamulus reducens (strain ATCC BAA-1160 / DSM 100696 / MI-1) (Desulfotomaculum reducens).